Consider the following 361-residue polypeptide: Anthranilate phosphoribosyltransferase (361 aa).

Residues Gly80, 83–84 (GD), Thr88, 90–93 (NVST), 108–116 (KHGNYSVSS), and Ser120 each bind 5-phospho-alpha-D-ribose 1-diphosphate. Anthranilate is bound at residue Gly80. Ser92 is a binding site for Mg(2+). Asn111 contributes to the anthranilate binding site. Arg166 is an anthranilate binding site. Positions 224 and 225 each coordinate Mg(2+). A disordered region spans residues 338 to 361 (EGDGEAASTDSAAASTTAGPEDDD). Positions 343-355 (AASTDSAAASTTA) are enriched in low complexity.

Belongs to the anthranilate phosphoribosyltransferase family. Homodimer. Requires Mg(2+) as cofactor.

It catalyses the reaction N-(5-phospho-beta-D-ribosyl)anthranilate + diphosphate = 5-phospho-alpha-D-ribose 1-diphosphate + anthranilate. The protein operates within amino-acid biosynthesis; L-tryptophan biosynthesis; L-tryptophan from chorismate: step 2/5. In terms of biological role, catalyzes the transfer of the phosphoribosyl group of 5-phosphorylribose-1-pyrophosphate (PRPP) to anthranilate to yield N-(5'-phosphoribosyl)-anthranilate (PRA). The sequence is that of Anthranilate phosphoribosyltransferase from Halorubrum lacusprofundi (strain ATCC 49239 / DSM 5036 / JCM 8891 / ACAM 34).